Consider the following 87-residue polypeptide: Small ribosomal subunit protein uS17 (87 aa).

It belongs to the universal ribosomal protein uS17 family. In terms of assembly, part of the 30S ribosomal subunit.

In terms of biological role, one of the primary rRNA binding proteins, it binds specifically to the 5'-end of 16S ribosomal RNA. The chain is Small ribosomal subunit protein uS17 from Lacticaseibacillus casei (strain BL23) (Lactobacillus casei).